We begin with the raw amino-acid sequence, 353 residues long: Holliday junction branch migration complex subunit RuvB (353 aa).

The large ATPase domain (RuvB-L) stretch occupies residues 4-185; it reads ADRLITAVGG…FGIVQRLEFY (182 aa). Residues I24, R25, G66, K69, T70, T71, 132–134, R175, Y185, and R222 each bind ATP; that span reads EDF. T70 lines the Mg(2+) pocket. Residues 186–256 are small ATPAse domain (RuvB-S); the sequence is NIADLSTIVA…TADKALNLLD (71 aa). A head domain (RuvB-H) region spans residues 259 to 353; the sequence is EHGFDHQDRR…GEFVDDAADL (95 aa). Residues R295, R314, and R319 each coordinate DNA.

The protein belongs to the RuvB family. In terms of assembly, homohexamer. Forms an RuvA(8)-RuvB(12)-Holliday junction (HJ) complex. HJ DNA is sandwiched between 2 RuvA tetramers; dsDNA enters through RuvA and exits via RuvB. An RuvB hexamer assembles on each DNA strand where it exits the tetramer. Each RuvB hexamer is contacted by two RuvA subunits (via domain III) on 2 adjacent RuvB subunits; this complex drives branch migration. In the full resolvosome a probable DNA-RuvA(4)-RuvB(12)-RuvC(2) complex forms which resolves the HJ.

It is found in the cytoplasm. It catalyses the reaction ATP + H2O = ADP + phosphate + H(+). Its function is as follows. The RuvA-RuvB-RuvC complex processes Holliday junction (HJ) DNA during genetic recombination and DNA repair, while the RuvA-RuvB complex plays an important role in the rescue of blocked DNA replication forks via replication fork reversal (RFR). RuvA specifically binds to HJ cruciform DNA, conferring on it an open structure. The RuvB hexamer acts as an ATP-dependent pump, pulling dsDNA into and through the RuvAB complex. RuvB forms 2 homohexamers on either side of HJ DNA bound by 1 or 2 RuvA tetramers; 4 subunits per hexamer contact DNA at a time. Coordinated motions by a converter formed by DNA-disengaged RuvB subunits stimulates ATP hydrolysis and nucleotide exchange. Immobilization of the converter enables RuvB to convert the ATP-contained energy into a lever motion, pulling 2 nucleotides of DNA out of the RuvA tetramer per ATP hydrolyzed, thus driving DNA branch migration. The RuvB motors rotate together with the DNA substrate, which together with the progressing nucleotide cycle form the mechanistic basis for DNA recombination by continuous HJ branch migration. Branch migration allows RuvC to scan DNA until it finds its consensus sequence, where it cleaves and resolves cruciform DNA. This Pseudomonas syringae pv. tomato (strain ATCC BAA-871 / DC3000) protein is Holliday junction branch migration complex subunit RuvB.